We begin with the raw amino-acid sequence, 41 residues long: Photosystem I reaction center subunit IX (41 aa).

Residues 7–27 (YLSTAPVLATLWFGFLAGLLI) traverse the membrane as a helical segment.

The protein belongs to the PsaJ family.

The protein resides in the plastid. The protein localises to the chloroplast thylakoid membrane. In terms of biological role, may help in the organization of the PsaE and PsaF subunits. The chain is Photosystem I reaction center subunit IX from Physcomitrium patens (Spreading-leaved earth moss).